The chain runs to 646 residues: MKKLIELKGVSRTYGNGDQTRTVLKNVDLTIVAGEMVAIIGASGSGKSTLMNIMGCLDVPNRGDYYIDGQNAACLSPDELARVRREHIGFIFQRYHLIPDLSALGNVEIPAIYANSERDSRRQRATALLGRLGLEGREHHKPCELSGGQQQRVSIARALINGGKIILADEPTGALDSQSGQEVLAILNELNRRGHTVVMVTHDMKVARHAKRIIELCDGEIIADSGGCVSATETLPKTNRIRQSYWKTLLDRTRESMQMALKAMKTHRLRTTLTMIGIVFGIASVVTVVALGEGARQETLEEIKSLGTNVVSIYPGQDLFDDSIESIRTLVPADANALAKQGFIDSVSPEVSASDNIRFLGKSAIASINGVGREHFRVKGIELLQGTTFRDDRNALQEVIIDENTRKAIFDNTGLQALGQIVFLGSVPARVVGIAKSNNRSDASNRITVWMPYSTVMYRIVGKPVLTGISVRLKDNVDNEAAISAISQLLTRRHGIKDFQLYNFEQIRKSIEHTSMTFSILILMVACISLMIGSIGVMNIMLISVTERTHEIGVRMAVGARRSDIMQQFIIEAVLVCLIGGALGIALSYITGALFNALADGIFAAIYSWQAAVAAFFCSTLIGIIFGYLPARKAARMDPVISLASE.

The region spanning 5–243 (IELKGVSRTY…TLPKTNRIRQ (239 aa)) is the ABC transporter domain. 41 to 48 (GASGSGKS) lines the ATP pocket. 4 consecutive transmembrane segments (helical) span residues 272 to 292 (TLTM…VALG), 518 to 538 (FSIL…IGVM), 570 to 590 (IIEA…LSYI), and 611 to 631 (AAVA…YLPA).

It belongs to the ABC transporter superfamily. Macrolide exporter (TC 3.A.1.122) family. As to quaternary structure, homodimer. Part of the tripartite efflux system MacAB-TolC, which is composed of an inner membrane transporter, MacB, a periplasmic membrane fusion protein, MacA, and an outer membrane component, TolC. The complex forms a large protein conduit and can translocate molecules across both the inner and outer membranes. Interacts with MacA.

Its subcellular location is the cell inner membrane. Its function is as follows. Part of the tripartite efflux system MacAB-TolC. MacB is a non-canonical ABC transporter that contains transmembrane domains (TMD), which form a pore in the inner membrane, and an ATP-binding domain (NBD), which is responsible for energy generation. Confers resistance against macrolides. This is Macrolide export ATP-binding/permease protein MacB from Escherichia coli.